The sequence spans 323 residues: tRNA U34 carboxymethyltransferase (323 aa).

Residues lysine 91, tryptophan 105, lysine 110, glycine 130, 180 to 181, methionine 196, tyrosine 200, and arginine 315 contribute to the carboxy-S-adenosyl-L-methionine site; that span reads VE.

It belongs to the class I-like SAM-binding methyltransferase superfamily. CmoB family. Homotetramer.

It catalyses the reaction carboxy-S-adenosyl-L-methionine + 5-hydroxyuridine(34) in tRNA = 5-carboxymethoxyuridine(34) in tRNA + S-adenosyl-L-homocysteine + H(+). Catalyzes carboxymethyl transfer from carboxy-S-adenosyl-L-methionine (Cx-SAM) to 5-hydroxyuridine (ho5U) to form 5-carboxymethoxyuridine (cmo5U) at position 34 in tRNAs. The chain is tRNA U34 carboxymethyltransferase from Trichlorobacter lovleyi (strain ATCC BAA-1151 / DSM 17278 / SZ) (Geobacter lovleyi).